The sequence spans 288 residues: MASLKEIDTRIKSTKKMKQITKAMNMVSSSKLRRAEKNTKQFTPYMDKMQDAITAVAGASSNTNHPMLRPRKITRSGYLVITSDKGLAGAYSANVLKKLITDIEAKHQDSSEYSIVVLGQQGVDFLKNRGYDIEYSQVDVPDQPSFKSVQALANHAIDLYSEEEIDELNIYYSHYVSVLENKPTSRQVLPLSQEDSSKGHGHLSSYEFEPDKESILSVILPQYVESLIYGTILDAKASEHATRMTAMKNATDNATELIDDLSLEYNRARQAEITQQITEIVGGSAALE.

The protein belongs to the ATPase gamma chain family. F-type ATPases have 2 components, CF(1) - the catalytic core - and CF(0) - the membrane proton channel. CF(1) has five subunits: alpha(3), beta(3), gamma(1), delta(1), epsilon(1). CF(0) has three main subunits: a, b and c.

It localises to the cell membrane. Produces ATP from ADP in the presence of a proton gradient across the membrane. The gamma chain is believed to be important in regulating ATPase activity and the flow of protons through the CF(0) complex. In Staphylococcus aureus (strain Mu3 / ATCC 700698), this protein is ATP synthase gamma chain.